The sequence spans 406 residues: Luteothin monooxygenase (406 aa).

Heme b-binding residues include histidine 98, arginine 102, arginine 296, glycine 350, histidine 353, and cysteine 355.

It belongs to the cytochrome P450 family. As to quaternary structure, monomer. It depends on heme b as a cofactor.

It carries out the reaction luteothin + 4 reduced [2Fe-2S]-[ferredoxin] + 2 O2 + 4 H(+) = aureothin + 4 oxidized [2Fe-2S]-[ferredoxin] + 3 H2O. It functions in the pathway antibiotic biosynthesis. Its pathway is polyketide biosynthesis. In terms of biological role, bifunctional cytochrome P450 protein involved in the biosynthesis of the antibiotic aureothin, a nitroaryl polyketide metabolite with antifungal, cytotoxic and insecticidal activities. Catalyzes the hydroxylation of luteothin (also called deoxyaureothin), leading to the formation of the intermediate (7R)-7-hydroxydeoxyaureothin, followed by the formation of the aureothin tetrahydrofuran ring, the final step in the biosynthesis of aureothin. The sequence is that of Luteothin monooxygenase from Streptomyces thioluteus.